Consider the following 199-residue polypeptide: Protein GrpE (199 aa).

It belongs to the GrpE family. Homodimer.

It localises to the cytoplasm. Functionally, participates actively in the response to hyperosmotic and heat shock by preventing the aggregation of stress-denatured proteins, in association with DnaK and GrpE. It is the nucleotide exchange factor for DnaK and may function as a thermosensor. Unfolded proteins bind initially to DnaJ; upon interaction with the DnaJ-bound protein, DnaK hydrolyzes its bound ATP, resulting in the formation of a stable complex. GrpE releases ADP from DnaK; ATP binding to DnaK triggers the release of the substrate protein, thus completing the reaction cycle. Several rounds of ATP-dependent interactions between DnaJ, DnaK and GrpE are required for fully efficient folding. The protein is Protein GrpE of Fusobacterium nucleatum subsp. nucleatum (strain ATCC 25586 / DSM 15643 / BCRC 10681 / CIP 101130 / JCM 8532 / KCTC 2640 / LMG 13131 / VPI 4355).